The primary structure comprises 376 residues: MPPTPEVGLPLWLLAELTYRCPLQCPYCSNPLDFAAQGQELSTEQWFKVMAEAREMGAAQIGFSGGEPLVRQDLAQLIAEARRLGYYTNLITSGIGLTEARIADFKKAGLDHIQISFQASDEQVNNLLAGSKKAFAQKLEMARAVKAHGYPMVLNFVTHRHNIDKIDRIIELCIALEADFVELATCQFYGWAHLNRLGLLPTRAQLERAERITNEYRDKLKAEGNPCKLIFVTPDYYEERPKACMNGWGNLFLTITPDGTALPCHGARQLPVQFPNVRDHDLHHIWYESFGFNRFRGYEWMREPCRSCDEKEKDFGGCRCQAFMLTGDASNADPVCAKSTDHGIILKAREEAETAQLAIEQMTFRNDRNSRVIARG.

The Radical SAM core domain maps to 7–222; sequence VGLPLWLLAE…TNEYRDKLKA (216 aa). [4Fe-4S] cluster is bound by residues Cys21, Cys25, and Cys28.

This sequence belongs to the radical SAM superfamily. PqqE family. Interacts with PqqD. The interaction is necessary for activity of PqqE. [4Fe-4S] cluster is required as a cofactor.

It carries out the reaction [PQQ precursor protein] + S-adenosyl-L-methionine = E-Y cross-linked-[PQQ precursor protein] + 5'-deoxyadenosine + L-methionine + H(+). The protein operates within cofactor biosynthesis; pyrroloquinoline quinone biosynthesis. Catalyzes the cross-linking of a glutamate residue and a tyrosine residue in the PqqA protein as part of the biosynthesis of pyrroloquinoline quinone (PQQ). This Pseudomonas putida (strain ATCC 47054 / DSM 6125 / CFBP 8728 / NCIMB 11950 / KT2440) protein is PqqA peptide cyclase.